Consider the following 363-residue polypeptide: Fructose-bisphosphate aldolase (363 aa).

Arginine 56 and lysine 147 together coordinate substrate. The Proton acceptor role is filled by glutamate 188. Residue lysine 230 is the Schiff-base intermediate with dihydroxyacetone-P of the active site.

The protein belongs to the class I fructose-bisphosphate aldolase family.

It catalyses the reaction beta-D-fructose 1,6-bisphosphate = D-glyceraldehyde 3-phosphate + dihydroxyacetone phosphate. It functions in the pathway carbohydrate degradation; glycolysis; D-glyceraldehyde 3-phosphate and glycerone phosphate from D-glucose: step 4/4. The sequence is that of Fructose-bisphosphate aldolase (FBPA) from Echinococcus multilocularis (Fox tapeworm).